The primary structure comprises 962 residues: Leucine--tRNA ligase (962 aa).

A 'HIGH' region motif is present at residues 40 to 51; the sequence is PYPSGAGLHVGH. A 'KMSKS' region motif is present at residues 737–741; it reads KMSKS. Lys-740 contacts ATP.

This sequence belongs to the class-I aminoacyl-tRNA synthetase family.

The protein resides in the cytoplasm. The enzyme catalyses tRNA(Leu) + L-leucine + ATP = L-leucyl-tRNA(Leu) + AMP + diphosphate. The chain is Leucine--tRNA ligase from Flavobacterium psychrophilum (strain ATCC 49511 / DSM 21280 / CIP 103535 / JIP02/86).